The following is a 472-amino-acid chain: Argininosuccinate lyase (472 aa).

This sequence belongs to the lyase 1 family. Argininosuccinate lyase subfamily.

It localises to the cytoplasm. The enzyme catalyses 2-(N(omega)-L-arginino)succinate = fumarate + L-arginine. Its pathway is amino-acid biosynthesis; L-arginine biosynthesis; L-arginine from L-ornithine and carbamoyl phosphate: step 3/3. The sequence is that of Argininosuccinate lyase from Synechococcus sp. (strain CC9311).